A 187-amino-acid chain; its full sequence is Methylamine dehydrogenase light chain (187 aa).

The segment at residues 1-57 is a signal peptide (tat-type signal); that stretch reads MKKDTGFDSKIEKLARTTASKTGRRGFIGRLGGFLVGSALLPLLPVDRRSRLGGEVQ. 6 disulfide bridges follow: Cys-79-Cys-144, Cys-85-Cys-117, Cys-92-Cys-177, Cys-94-Cys-142, Cys-102-Cys-133, and Cys-134-Cys-165. Trp-113 carries the tryptophylquinone modification. Residues 113-164 constitute a cross-link (tryptophan tryptophylquinone (Trp-Trp)); the sequence is WVASCYNPGDQQTYLIAYRDCCGKQTCGRCNCVNTQGELPVYRPEFNNDIVW.

It belongs to the aromatic amine dehydrogenase light chain family. Heterotetramer of two light and two heavy chains. Tryptophan tryptophylquinone residue is required as a cofactor. Predicted to be exported by the Tat system. The position of the signal peptide cleavage has not been experimentally proven. In terms of processing, tryptophan tryptophylquinone (TTQ) is formed by oxidation of the indole ring of a tryptophan to form tryptophylquinone followed by covalent cross-linking with another tryptophan residue.

The protein resides in the periplasm. The enzyme catalyses 2 oxidized [amicyanin] + methylamine + H2O = 2 reduced [amicyanin] + formaldehyde + NH4(+) + 2 H(+). The protein operates within one-carbon metabolism; methylamine degradation; formaldehyde from methylamine: step 1/1. In terms of biological role, methylamine dehydrogenase carries out the oxidation of methylamine. Electrons are passed from methylamine dehydrogenase to amicyanin. The chain is Methylamine dehydrogenase light chain (mauA) from Methylophilus methylotrophus (Bacterium W3A1).